Consider the following 171-residue polypeptide: Protein phosphatase 1 regulatory subunit 1A (171 aa).

Methionine 1 is modified (N-acetylmethionine). Positions 1 to 171 are disordered; it reads MEQDNSPRKI…PLDSKGANSV (171 aa). The tract at residues 9–12 is essential for activity; the sequence is KIQF. Basic and acidic residues predominate over residues 19–29; that stretch reads PHLDPEAAEQI. The residue at position 35 (threonine 35) is a Phosphothreonine; by PKA. The essential for activity stretch occupies residues 42–54; sequence TSDQSSPEIDEDR. Phosphoserine is present on residues serine 43, serine 46, serine 47, and serine 67. Positions 135–157 are enriched in basic and acidic residues; the sequence is KTAECIPKTHERGSKEPSTKEPS. The tract at residues 143–171 is interaction with PPP1R15A; sequence THERGSKEPSTKEPSTHIPPLDSKGANSV.

This sequence belongs to the protein phosphatase inhibitor 1 family. Interacts with PPP1R15A. In terms of processing, phosphorylation of Thr-35 is required for activity.

In terms of biological role, inhibitor of protein-phosphatase 1. This protein may be important in hormonal control of glycogen metabolism. Hormones that elevate intracellular cAMP increase I-1 activity in many tissues. I-1 activation may impose cAMP control over proteins that are not directly phosphorylated by PKA. Following a rise in intracellular calcium, I-1 is inactivated by calcineurin (or PP2B). Does not inhibit type-2 phosphatases. The protein is Protein phosphatase 1 regulatory subunit 1A (PPP1R1A) of Homo sapiens (Human).